A 1102-amino-acid polypeptide reads, in one-letter code: Phosphatidylinositol 4,5-bisphosphate 3-kinase catalytic subunit gamma isoform (1102 aa).

The 108-residue stretch at 34–141 (SMELIPIEFV…PGQIHLVQRH (108 aa)) folds into the PI3K-ABD domain. The PI3K-RBD domain maps to 217 to 309 (NNCIFIVIHR…GEEIHVVLDT (93 aa)). The C2 PI3K-type domain occupies 357-521 (CDRKFRVKIR…NSMSISILLD (165 aa)). The PIK helical domain occupies 541 to 723 (DRVRAEMPNQ…AVILEAYLRG (183 aa)). The PI3K/PI4K catalytic domain maps to 797-1080 (AIEKCKVMAS…QIEVCRDKGW (284 aa)). The interval 803 to 809 (VMASKKK) is G-loop. ATP contacts are provided by residues 829-838 (GIIFKHGDDL) and 864-872 (LLPYGCIST). The interval 943–951 (GIGDRHNDN) is catalytic loop. Residue 961–969 (FHIDFGHIL) participates in ATP binding. The activation loop stretch occupies residues 962 to 988 (HIDFGHILGNYKSFLGINKERVPFVLT). Thr1024 bears the Phosphothreonine; by PKA mark. Ser1101 is subject to Phosphoserine; by autocatalysis.

Belongs to the PI3/PI4-kinase family. In terms of assembly, heterodimer of a catalytic subunit PIK3CG and a PIK3R5 or PIK3R6 regulatory subunit. Interacts with GRK2 through the PIK helical domain. Interaction with GRK2 is required for targeting to agonist-occupied receptor. Interacts with PDE3B; regulates PDE3B activity and thereby cAMP levels in cells. Interacts with TPM2. Interacts with EPHA8; regulates integrin-mediated cell adhesion to substrate. Interacts with HRAS; the interaction is required for membrane recruitment and beta-gamma G protein dimer-dependent activation of the PI3K gamma complex PIK3CG:PIK3R6. Post-translationally, autophosphorylation at Ser-1101 has no effect on the phosphatidylinositol-4,5-bisphosphate 3-kinase activity. Pancreas, skeletal muscle, liver and heart.

The protein localises to the cytoplasm. The protein resides in the cell membrane. It catalyses the reaction a 1,2-diacyl-sn-glycero-3-phospho-(1D-myo-inositol) + ATP = a 1,2-diacyl-sn-glycero-3-phospho-(1D-myo-inositol-3-phosphate) + ADP + H(+). It carries out the reaction a 1,2-diacyl-sn-glycero-3-phospho-(1D-myo-inositol-4,5-bisphosphate) + ATP = a 1,2-diacyl-sn-glycero-3-phospho-(1D-myo-inositol-3,4,5-trisphosphate) + ADP + H(+). The enzyme catalyses a 1,2-diacyl-sn-glycero-3-phospho-(1D-myo-inositol 4-phosphate) + ATP = a 1,2-diacyl-sn-glycero-3-phospho-(1D-myo-inositol-3,4-bisphosphate) + ADP + H(+). The catalysed reaction is L-seryl-[protein] + ATP = O-phospho-L-seryl-[protein] + ADP + H(+). The protein operates within phospholipid metabolism; phosphatidylinositol phosphate biosynthesis. Its activity is regulated as follows. Activated by both the alpha and the beta-gamma G proteins following stimulation of G protein-coupled receptors (GPCRs). Activation by GPCRs is assisted by the regulatory subunits (PIK3R5 or PIK3R6) leading to the translocation from the cytosol to the plasma membrane and to kinase activation. Inhibited by AS-604850 and AS-605240. Functionally, phosphoinositide-3-kinase (PI3K) that phosphorylates PtdIns(4,5)P2 (Phosphatidylinositol 4,5-bisphosphate) to generate phosphatidylinositol 3,4,5-trisphosphate (PIP3). PIP3 plays a key role by recruiting PH domain-containing proteins to the membrane, including AKT1 and PDPK1, activating signaling cascades involved in cell growth, survival, proliferation, motility and morphology. Links G-protein coupled receptor activation to PIP3 production. Involved in immune, inflammatory and allergic responses. Modulates leukocyte chemotaxis to inflammatory sites and in response to chemoattractant agents. May control leukocyte polarization and migration by regulating the spatial accumulation of PIP3 and by regulating the organization of F-actin formation and integrin-based adhesion at the leading edge. Controls motility of dendritic cells. Together with PIK3CD is involved in natural killer (NK) cell development and migration towards the sites of inflammation. Participates in T-lymphocyte migration. Regulates T-lymphocyte proliferation, activation, and cytokine production. Together with PIK3CD participates in T-lymphocyte development. Required for B-lymphocyte development and signaling. Together with PIK3CD participates in neutrophil respiratory burst. Together with PIK3CD is involved in neutrophil chemotaxis and extravasation. Together with PIK3CB promotes platelet aggregation and thrombosis. Regulates alpha-IIb/beta-3 integrins (ITGA2B/ ITGB3) adhesive function in platelets downstream of P2Y12 through a lipid kinase activity-independent mechanism. May have also a lipid kinase activity-dependent function in platelet aggregation. Involved in endothelial progenitor cell migration. Negative regulator of cardiac contractility. Modulates cardiac contractility by anchoring protein kinase A (PKA) and PDE3B activation, reducing cAMP levels. Regulates cardiac contractility also by promoting beta-adrenergic receptor internalization by binding to GRK2 and by non-muscle tropomyosin phosphorylation. Also has serine/threonine protein kinase activity: both lipid and protein kinase activities are required for beta-adrenergic receptor endocytosis. May also have a scaffolding role in modulating cardiac contractility. Contributes to cardiac hypertrophy under pathological stress. Through simultaneous binding of PDE3B to RAPGEF3 and PIK3R6 is assembled in a signaling complex in which the PI3K gamma complex is activated by RAPGEF3 and which is involved in angiogenesis. In neutrophils, participates in a phospholipase C-activating N-formyl peptide-activated GPCR (G protein-coupled receptor) signaling pathway downstream of RASGRP4-mediated Ras-activation, to promote neutrophil functional responses. The sequence is that of Phosphatidylinositol 4,5-bisphosphate 3-kinase catalytic subunit gamma isoform (PIK3CG) from Homo sapiens (Human).